Consider the following 312-residue polypeptide: Porphobilinogen deaminase (312 aa).

The residue at position 235 (Cys-235) is an S-(dipyrrolylmethanemethyl)cysteine.

Belongs to the HMBS family. In terms of assembly, monomer. It depends on dipyrromethane as a cofactor.

It carries out the reaction 4 porphobilinogen + H2O = hydroxymethylbilane + 4 NH4(+). It participates in porphyrin-containing compound metabolism; protoporphyrin-IX biosynthesis; coproporphyrinogen-III from 5-aminolevulinate: step 2/4. Functionally, tetrapolymerization of the monopyrrole PBG into the hydroxymethylbilane pre-uroporphyrinogen in several discrete steps. This chain is Porphobilinogen deaminase, found in Mycolicibacterium gilvum (strain PYR-GCK) (Mycobacterium gilvum (strain PYR-GCK)).